Here is a 141-residue protein sequence, read N- to C-terminus: Putative pre-16S rRNA nuclease (141 aa).

Belongs to the YqgF nuclease family.

The protein resides in the cytoplasm. In terms of biological role, could be a nuclease involved in processing of the 5'-end of pre-16S rRNA. The polypeptide is Putative pre-16S rRNA nuclease (Roseiflexus sp. (strain RS-1)).